Reading from the N-terminus, the 582-residue chain is 5-aminolevulinate synthase, erythroid-specific, mitochondrial (582 aa).

A mitochondrion-targeting transit peptide spans 1–44 (MLLQRCPVLIRSPTAILGKMIKTHQFLIGIGRCPILATQGTTCS). Arginine 158 contributes to the succinyl-CoA binding site. Pyridoxal 5'-phosphate-binding residues include cysteine 253 and phenylalanine 254. Serine 275 and lysine 294 together coordinate succinyl-CoA. Pyridoxal 5'-phosphate contacts are provided by serine 327, histidine 355, and threonine 383. Residue lysine 386 is part of the active site. Lysine 386 bears the N6-(pyridoxal phosphate)lysine mark. The pyridoxal 5'-phosphate site is built by threonine 415 and threonine 416. Threonine 503 contributes to the succinyl-CoA binding site.

It belongs to the class-II pyridoxal-phosphate-dependent aminotransferase family. In terms of assembly, homodimer. Pyridoxal 5'-phosphate serves as cofactor.

Its subcellular location is the mitochondrion inner membrane. The catalysed reaction is succinyl-CoA + glycine + H(+) = 5-aminolevulinate + CO2 + CoA. Its pathway is porphyrin-containing compound metabolism; protoporphyrin-IX biosynthesis; 5-aminolevulinate from glycine: step 1/1. Functionally, catalyzes the pyridoxal 5'-phosphate (PLP)-dependent condensation of succinyl-CoA and glycine to form aminolevulinic acid (ALA), with CoA and CO2 as by-products. Contributes significantly to heme formation during erythropoiesis. This chain is 5-aminolevulinate synthase, erythroid-specific, mitochondrial (ALAS2), found in Delphinapterus leucas (Beluga whale).